The sequence spans 439 residues: Glutamate--tRNA ligase 2 (439 aa).

Residues 6-16 carry the 'HIGH' region motif; that stretch reads PSPTGDMHIGN. Residues 232–236 carry the 'KMSKS' region motif; the sequence is KMSKR. Residue Lys-235 coordinates ATP.

The protein belongs to the class-I aminoacyl-tRNA synthetase family. Glutamate--tRNA ligase type 1 subfamily. In terms of assembly, monomer.

It localises to the cytoplasm. It carries out the reaction tRNA(Glu) + L-glutamate + ATP = L-glutamyl-tRNA(Glu) + AMP + diphosphate. In terms of biological role, catalyzes the attachment of glutamate to tRNA(Glu) in a two-step reaction: glutamate is first activated by ATP to form Glu-AMP and then transferred to the acceptor end of tRNA(Glu). The polypeptide is Glutamate--tRNA ligase 2 (Helicobacter pylori (strain Shi470)).